The primary structure comprises 338 residues: Glyceraldehyde-3-phosphate dehydrogenase 1 (338 aa).

Residues 13 to 14 (TI) and Gly111 contribute to the NAD(+) site. A D-glyceraldehyde 3-phosphate-binding site is contributed by 140-142 (SCN). The active-site Nucleophile is Cys141. Arg169 is a binding site for NAD(+). 195 to 196 (HG) provides a ligand contact to D-glyceraldehyde 3-phosphate. Gln300 contributes to the NAD(+) binding site.

It belongs to the glyceraldehyde-3-phosphate dehydrogenase family. As to quaternary structure, homotetramer.

The protein resides in the cytoplasm. The enzyme catalyses D-glyceraldehyde 3-phosphate + phosphate + NADP(+) = (2R)-3-phospho-glyceroyl phosphate + NADPH + H(+). It catalyses the reaction D-glyceraldehyde 3-phosphate + phosphate + NAD(+) = (2R)-3-phospho-glyceroyl phosphate + NADH + H(+). It participates in carbohydrate degradation; glycolysis; pyruvate from D-glyceraldehyde 3-phosphate: step 1/5. The polypeptide is Glyceraldehyde-3-phosphate dehydrogenase 1 (Methanosarcina barkeri (strain Fusaro / DSM 804)).